A 500-amino-acid polypeptide reads, in one-letter code: MQISSSGYILALDLGTTGNRAFIFNNAGKIVAQAYKELTQHYPQPGWLEHDAEEIWQDTCWVMKTAIVNAQISPSEIAAIGLTVQRETCLLWDKTTGRPLHKAIVWQDRRTAPLCHQLQEKGYAQEIYSRTGLVVDAYFSATKLRWLLDYITGVDLKNVLAGTIDTWILWKLTGGKVHATDHSNASRTMLMNLKTGEWDEQLLEILQIPAHILPQIQPSLGKFGVTDTSLLDAAIPITAILGDQQAALFGHGCDRPGLMKCTYGTGSFLVAHTGSNIVRSQHQLISTIAWTQADKQENINIGYALEGSMFTSGACIQWLRDGIKLIKTAAETETMANQVADNGGVYFVPAFSGLGAPYWDMNARGAFFGITASVQPQHLVRAVLEAIAYQVLEVVQAINASCSSPMQRLIVDGGACENNFLMQFQADVLGIPVERPTMRDTTVQGAAFAAGLAVGFWDSYTALVNQRQIDRIFEPGEGSQNATANFAIWQKAVKRSLDWV.

T16 serves as a coordination point for ADP. ATP contacts are provided by T16 and T17. T16 contacts sn-glycerol 3-phosphate. R20 contributes to the ADP binding site. 4 residues coordinate sn-glycerol 3-phosphate: R86, E87, Y138, and D243. Positions 86, 87, 138, 243, and 244 each coordinate glycerol. Residues T265 and G313 each contribute to the ADP site. Residues T265, G313, Q317, and G414 each coordinate ATP. G414 and N418 together coordinate ADP.

The protein belongs to the FGGY kinase family.

It carries out the reaction glycerol + ATP = sn-glycerol 3-phosphate + ADP + H(+). It functions in the pathway polyol metabolism; glycerol degradation via glycerol kinase pathway; sn-glycerol 3-phosphate from glycerol: step 1/1. Inhibited by fructose 1,6-bisphosphate (FBP). In terms of biological role, key enzyme in the regulation of glycerol uptake and metabolism. Catalyzes the phosphorylation of glycerol to yield sn-glycerol 3-phosphate. The chain is Glycerol kinase from Nostoc sp. (strain PCC 7120 / SAG 25.82 / UTEX 2576).